Reading from the N-terminus, the 338-residue chain is Probable G-protein coupled receptor 160 (338 aa).

The Extracellular segment spans residues 1 to 23 (MTALSSENCSFQYQLRQTNQPLD). N-linked (GlcNAc...) asparagine glycosylation is present at asparagine 8. The helical transmembrane segment at 24-44 (VNYLLFLIILGKILLNILTLG) threads the bilayer. At 45–58 (MRRKNTCQNFMEYF) the chain is on the cytoplasmic side. A helical transmembrane segment spans residues 59–79 (CISLAFVDLLLLVNISIILYF). At 80-93 (RDFVLLSIRFTKYH) the chain is on the extracellular side. Residues 94-114 (ICLFTQIISFTYGFLHYPVFL) form a helical membrane-spanning segment. Residues 115–136 (TACIDYCLNFSKTTKLSFKCQK) lie on the Cytoplasmic side of the membrane. A helical membrane pass occupies residues 137–157 (LFYFFTVILIWISVLAYVLGD). Residues 158-177 (PAIYQSLKAQNAYSRHCPFY) lie on the Extracellular side of the membrane. A helical membrane pass occupies residues 178 to 198 (VSIQSYWLSFFMVMILFVAFI). Over 199–244 (TCWEEVTTLVQAIRITSYMNETILYFPFSSHSSYTVRSKKIFLSKL) the chain is Cytoplasmic. Residues 245–265 (IVCFLSTWLPFVLLQVIIVLL) traverse the membrane as a helical segment. Residues 266 to 268 (KVQ) lie on the Extracellular side of the membrane. A helical membrane pass occupies residues 269–289 (IPAYIEMNIPWLYFVNSFLIA). Topologically, residues 290-338 (TVYWFNCHKLNLKDIGLPLDPFVNWKCCFIPLTIPNLEQIEKPISIMIC) are cytoplasmic.

Belongs to the G-protein coupled receptor 1 family.

It localises to the cell membrane. Orphan receptor. The chain is Probable G-protein coupled receptor 160 (GPR160) from Homo sapiens (Human).